We begin with the raw amino-acid sequence, 201 residues long: Cardiotrophin-1 (201 aa).

It belongs to the IL-6 superfamily. As to expression, highly expressed in heart, skeletal muscle, prostate and ovary. Lower levels in lung, kidney, pancreas, thymus, testis and small intestine. Little or no expression in brain, placenta, liver, spleen, colon or peripheral blood leukocytes.

It is found in the secreted. Induces cardiac myocyte hypertrophy in vitro. Binds to and activates the ILST/gp130 receptor. The polypeptide is Cardiotrophin-1 (CTF1) (Homo sapiens (Human)).